We begin with the raw amino-acid sequence, 451 residues long: BAHD acyltransferase At3g29680 (451 aa).

Residues His-161 and Asp-393 each act as proton acceptor in the active site.

This sequence belongs to the plant acyltransferase family.

This is BAHD acyltransferase At3g29680 from Arabidopsis thaliana (Mouse-ear cress).